The following is a 1645-amino-acid chain: Protein MON2 homolog (1645 aa).

This sequence belongs to the MON2 family.

May be required for traffic between late Golgi and early endosomes. In Caenorhabditis briggsae, this protein is Protein MON2 homolog.